A 156-amino-acid chain; its full sequence is ATP synthase subunit b (156 aa).

The helical transmembrane segment at 7–27 (LIGELIAFTVFVLFCMKFVWP) threads the bilayer.

This sequence belongs to the ATPase B chain family. In terms of assembly, F-type ATPases have 2 components, F(1) - the catalytic core - and F(0) - the membrane proton channel. F(1) has five subunits: alpha(3), beta(3), gamma(1), delta(1), epsilon(1). F(0) has three main subunits: a(1), b(2) and c(10-14). The alpha and beta chains form an alternating ring which encloses part of the gamma chain. F(1) is attached to F(0) by a central stalk formed by the gamma and epsilon chains, while a peripheral stalk is formed by the delta and b chains.

It is found in the cell inner membrane. F(1)F(0) ATP synthase produces ATP from ADP in the presence of a proton or sodium gradient. F-type ATPases consist of two structural domains, F(1) containing the extramembraneous catalytic core and F(0) containing the membrane proton channel, linked together by a central stalk and a peripheral stalk. During catalysis, ATP synthesis in the catalytic domain of F(1) is coupled via a rotary mechanism of the central stalk subunits to proton translocation. Functionally, component of the F(0) channel, it forms part of the peripheral stalk, linking F(1) to F(0). The sequence is that of ATP synthase subunit b from Pseudoalteromonas translucida (strain TAC 125).